Reading from the N-terminus, the 186-residue chain is Elongation factor P (186 aa).

It belongs to the elongation factor P family.

It is found in the cytoplasm. The protein operates within protein biosynthesis; polypeptide chain elongation. Functionally, involved in peptide bond synthesis. Stimulates efficient translation and peptide-bond synthesis on native or reconstituted 70S ribosomes in vitro. Probably functions indirectly by altering the affinity of the ribosome for aminoacyl-tRNA, thus increasing their reactivity as acceptors for peptidyl transferase. The chain is Elongation factor P from Shewanella halifaxensis (strain HAW-EB4).